The sequence spans 765 residues: SNF-related serine/threonine-protein kinase (765 aa).

The 254-residue stretch at 16 to 269 (YDLDKTLGRG…LEEIENHPWL (254 aa)) folds into the Protein kinase domain. ATP is bound by residues 22–30 (LGRGHFAVV) and Lys-45. Asp-139 serves as the catalytic Proton acceptor. A Phosphoserine modification is found at Ser-162. Thr-173 is modified (phosphothreonine; by LKB1). The UBA domain occupies 291–334 (SEEEHNSIIQRMVLGDIADRDAIVEALETNRYNHITATYFLLAE). A phosphoserine mark is found at Ser-362, Ser-390, Ser-482, Ser-495, and Ser-518. The segment at 512–634 (LKMNIASPGT…RCAGPSNSMQ (123 aa)) is disordered. The segment covering 522–532 (VHKRYHRRKSQ) has biased composition (basic residues). The segment covering 533 to 542 (GRGSSCSSSE) has biased composition (low complexity). Arg-534 is subject to Omega-N-methylarginine. Basic and acidic residues predominate over residues 549-558 (ESRRRLDKDS). The span at 603-614 (AGGGSPSSGSGG) shows a compositional bias: gly residues. Ser-607 is modified (phosphoserine).

This sequence belongs to the protein kinase superfamily. CAMK Ser/Thr protein kinase family. It depends on Mg(2+) as a cofactor. Post-translationally, autophosphorylated. Phosphorylation on Thr-173 by STK11/LKB1 in complex with STE20-related adapter-alpha (STRADA) pseudo kinase and CAB39. In terms of tissue distribution, expressed in hematopoietic progenitor cells and leukemic cell lines. Weakly expressed in the testis.

The protein resides in the nucleus. The catalysed reaction is L-seryl-[protein] + ATP = O-phospho-L-seryl-[protein] + ADP + H(+). It carries out the reaction L-threonyl-[protein] + ATP = O-phospho-L-threonyl-[protein] + ADP + H(+). Activated by phosphorylation on Thr-173. In terms of biological role, may play a role in hematopoietic cell proliferation or differentiation. Potential mediator of neuronal apoptosis. The polypeptide is SNF-related serine/threonine-protein kinase (Homo sapiens (Human)).